Here is a 393-residue protein sequence, read N- to C-terminus: Proteasome-activating nucleotidase (393 aa).

The stretch at 15 to 53 (DEVQLVRLLEEKIKSLQIEIENLRKELNYYKAEMEKMLS) forms a coiled coil. ATP contacts are provided by residues 178–183 (GTGKTM) and Y317. Residues 365–393 (MNDLVEAINKINVKRNKMESMKERREKYS) adopt a coiled-coil conformation. The tract at residues 391-393 (KYS) is docks into pockets in the proteasome alpha-ring to cause gate opening.

It belongs to the AAA ATPase family. Homohexamer. The hexameric complex has a two-ring architecture resembling a top hat that caps the 20S proteasome core at one or both ends. Upon ATP-binding, the C-terminus of PAN interacts with the alpha-rings of the proteasome core by binding to the intersubunit pockets.

Its subcellular location is the cytoplasm. Its function is as follows. ATPase which is responsible for recognizing, binding, unfolding and translocation of substrate proteins into the archaeal 20S proteasome core particle. Is essential for opening the gate of the 20S proteasome via an interaction with its C-terminus, thereby allowing substrate entry and access to the site of proteolysis. Thus, the C-termini of the proteasomal ATPase function like a 'key in a lock' to induce gate opening and therefore regulate proteolysis. Unfolding activity requires energy from ATP hydrolysis, whereas ATP binding alone promotes ATPase-20S proteasome association which triggers gate opening, and supports translocation of unfolded substrates. The protein is Proteasome-activating nucleotidase of Saccharolobus solfataricus (strain ATCC 35092 / DSM 1617 / JCM 11322 / P2) (Sulfolobus solfataricus).